We begin with the raw amino-acid sequence, 37 residues long: Large ribosomal subunit protein bL36 (37 aa).

It belongs to the bacterial ribosomal protein bL36 family.

The sequence is that of Large ribosomal subunit protein bL36 from Aliivibrio fischeri (strain ATCC 700601 / ES114) (Vibrio fischeri).